Here is a 402-residue protein sequence, read N- to C-terminus: Methylthioribose-1-phosphate isomerase (402 aa).

Catalysis depends on Asp-275, which acts as the Proton donor.

The protein belongs to the eIF-2B alpha/beta/delta subunits family. MtnA subfamily.

It localises to the cytoplasm. It is found in the nucleus. It catalyses the reaction 5-(methylsulfanyl)-alpha-D-ribose 1-phosphate = 5-(methylsulfanyl)-D-ribulose 1-phosphate. Its pathway is amino-acid biosynthesis; L-methionine biosynthesis via salvage pathway; L-methionine from S-methyl-5-thio-alpha-D-ribose 1-phosphate: step 1/6. Functionally, catalyzes the interconversion of methylthioribose-1-phosphate (MTR-1-P) into methylthioribulose-1-phosphate (MTRu-1-P). The protein is Methylthioribose-1-phosphate isomerase of Clavispora lusitaniae (strain ATCC 42720) (Yeast).